We begin with the raw amino-acid sequence, 160 residues long: Endoribonuclease YbeY (160 aa).

The Zn(2+) site is built by His-124, His-128, and His-134.

It belongs to the endoribonuclease YbeY family. The cofactor is Zn(2+).

It localises to the cytoplasm. Functionally, single strand-specific metallo-endoribonuclease involved in late-stage 70S ribosome quality control and in maturation of the 3' terminus of the 16S rRNA. The protein is Endoribonuclease YbeY of Jannaschia sp. (strain CCS1).